A 72-amino-acid chain; its full sequence is Translation initiation factor IF-1 (72 aa).

An S1-like domain is found at 1-72 (MAKEEMLEFP…TKGRINYRFK (72 aa)).

Belongs to the IF-1 family. As to quaternary structure, component of the 30S ribosomal translation pre-initiation complex which assembles on the 30S ribosome in the order IF-2 and IF-3, IF-1 and N-formylmethionyl-tRNA(fMet); mRNA recruitment can occur at any time during PIC assembly.

It localises to the cytoplasm. One of the essential components for the initiation of protein synthesis. Stabilizes the binding of IF-2 and IF-3 on the 30S subunit to which N-formylmethionyl-tRNA(fMet) subsequently binds. Helps modulate mRNA selection, yielding the 30S pre-initiation complex (PIC). Upon addition of the 50S ribosomal subunit IF-1, IF-2 and IF-3 are released leaving the mature 70S translation initiation complex. This chain is Translation initiation factor IF-1, found in Paracoccus denitrificans (strain Pd 1222).